A 347-amino-acid polypeptide reads, in one-letter code: Phenylalanine--tRNA ligase alpha subunit (347 aa).

Residue glutamate 261 participates in Mg(2+) binding.

It belongs to the class-II aminoacyl-tRNA synthetase family. Phe-tRNA synthetase alpha subunit type 1 subfamily. Tetramer of two alpha and two beta subunits. Mg(2+) serves as cofactor.

It localises to the cytoplasm. It carries out the reaction tRNA(Phe) + L-phenylalanine + ATP = L-phenylalanyl-tRNA(Phe) + AMP + diphosphate + H(+). In Streptococcus pyogenes serotype M18 (strain MGAS8232), this protein is Phenylalanine--tRNA ligase alpha subunit.